A 908-amino-acid chain; its full sequence is SH3 and PX domain-containing protein 2B (908 aa).

The PX domain occupies 5–129; it reads RSIVEVKVLD…QFFETRPEDL (125 aa). Tyr-25 is subject to Phosphotyrosine. SH3 domains are found at residues 152 to 211 and 221 to 280; these read MVLE…GQDG and EEEE…KNSG. A phosphoserine mark is found at Ser-279 and Ser-291. 2 disordered regions span residues 280–300 and 315–366; these read GEPLPPKLGPSSPAHSGALDL and ELLN…PPIP. The segment covering 315-337 has biased composition (basic and acidic residues); the sequence is ELLNNQRDGRFEGRLVPDGDVKQ. The segment covering 338–347 has biased composition (basic residues); the sequence is RSPKMRQRPP. The region spanning 368-427 is the SH3 3 domain; it reads QVEEEYYTIAEFQTTIPDGISFQAGLKVEVIEKSLSGWWYIQMEDKEGWAPATFIDKYKK. Positions 455-832 are disordered; it reads TENNTGPEAV…LGPRVTGKVG (378 aa). 5 stretches are compositionally biased toward basic and acidic residues: residues 486 to 499, 516 to 546, 569 to 584, 595 to 606, and 615 to 625; these read KDWKGGKEAPRKAS, QEEKPSLPPRKESIIKSEEELLERERQKMEP, LARDSRKPEPKLDKSK, CGHKVLAKEVKK, and SKAELSEEKVD. Ser-499 and Ser-528 each carry phosphoserine. Residue Tyr-661 is modified to Phosphotyrosine. The segment covering 671–684 has biased composition (basic and acidic residues); the sequence is KSQEKALLDGESHH. The segment covering 754–764 has biased composition (pro residues); that stretch reads VVPPRRPPPPK. Position 840 is a phosphoserine (Ser-840). The SH3 4 domain occupies 847 to 908; that stretch reads PKDSLYVAVA…IPSNYLRKKP (62 aa).

It belongs to the SH3PXD2 family. Interacts with NOXO1. Interacts (via SH3 domains) with NOXA1; the interaction is direct. Interacts with ADAM15. Interacts with FASLG. Phosphorylated in SRC-transformed cells. As to expression, highly expressed in the stromal-vascular fraction of white adipose tissue with moderate expression in heart, skeletal muscle and the mature adipocyte fraction of white adipose tissue. Also expressed in brain, spleen, kidney and liver. Expressed in white and brown adipose tissues, eye, lung, heart, brain, spleen, stomach, liver and skeletal muscle (at protein level). Not expressed in kidney or bone marrow.

It is found in the cytoplasm. It localises to the cell projection. Its subcellular location is the podosome. Adapter protein involved in invadopodia and podosome formation and extracellular matrix degradation. Binds matrix metalloproteinases (ADAMs), NADPH oxidases (NOXs) and phosphoinositides. Acts as an organizer protein that allows NOX1- or NOX3-dependent reactive oxygen species (ROS) generation and ROS localization. Plays a role in mitotic clonal expansion during the immediate early stage of adipocyte differentiation. This chain is SH3 and PX domain-containing protein 2B (Sh3pxd2b), found in Mus musculus (Mouse).